The following is a 459-amino-acid chain: Bifunctional protein GlmU (459 aa).

Residues 1 to 229 are pyrophosphorylase; sequence MSNFAIILAA…FDESLGVNDR (229 aa). UDP-N-acetyl-alpha-D-glucosamine-binding positions include 8–11, Lys-22, Gln-72, 77–78, 101–102, Gly-139, Glu-154, Asn-169, and Asn-227; these read LAAG, GT, and GD. Asp-102 lines the Ca(2+) pocket. Asp-102 contributes to the Mg(2+) binding site. Asn-227 contributes to the Ca(2+) binding site. Residue Asn-227 coordinates Mg(2+). The linker stretch occupies residues 230-250; sequence VALATAESVMRRRINHKHMVN. Residues 251–459 are N-acetyltransferase; the sequence is GVSFVNPEAT…TRLPHHPKNQ (209 aa). Arg-332 and Lys-350 together coordinate UDP-N-acetyl-alpha-D-glucosamine. The Proton acceptor role is filled by His-362. UDP-N-acetyl-alpha-D-glucosamine contacts are provided by Tyr-365 and Asn-376. Residues Ala-379, 385-386, Ser-404, Ala-422, and Arg-439 each bind acetyl-CoA; that span reads NY.

The protein in the N-terminal section; belongs to the N-acetylglucosamine-1-phosphate uridyltransferase family. This sequence in the C-terminal section; belongs to the transferase hexapeptide repeat family. In terms of assembly, homotrimer. Requires Mg(2+) as cofactor. Ca(2+) is required as a cofactor.

Its subcellular location is the cytoplasm. The enzyme catalyses alpha-D-glucosamine 1-phosphate + acetyl-CoA = N-acetyl-alpha-D-glucosamine 1-phosphate + CoA + H(+). The catalysed reaction is N-acetyl-alpha-D-glucosamine 1-phosphate + UTP + H(+) = UDP-N-acetyl-alpha-D-glucosamine + diphosphate. It functions in the pathway nucleotide-sugar biosynthesis; UDP-N-acetyl-alpha-D-glucosamine biosynthesis; N-acetyl-alpha-D-glucosamine 1-phosphate from alpha-D-glucosamine 6-phosphate (route II): step 2/2. The protein operates within nucleotide-sugar biosynthesis; UDP-N-acetyl-alpha-D-glucosamine biosynthesis; UDP-N-acetyl-alpha-D-glucosamine from N-acetyl-alpha-D-glucosamine 1-phosphate: step 1/1. Its pathway is bacterial outer membrane biogenesis; LPS lipid A biosynthesis. Functionally, catalyzes the last two sequential reactions in the de novo biosynthetic pathway for UDP-N-acetylglucosamine (UDP-GlcNAc). The C-terminal domain catalyzes the transfer of acetyl group from acetyl coenzyme A to glucosamine-1-phosphate (GlcN-1-P) to produce N-acetylglucosamine-1-phosphate (GlcNAc-1-P), which is converted into UDP-GlcNAc by the transfer of uridine 5-monophosphate (from uridine 5-triphosphate), a reaction catalyzed by the N-terminal domain. In Streptococcus pneumoniae serotype 4 (strain ATCC BAA-334 / TIGR4), this protein is Bifunctional protein GlmU.